A 308-amino-acid polypeptide reads, in one-letter code: Isoaspartyl peptidase/L-asparaginase (308 aa).

Met-1 is subject to N-acetylmethionine. Catalysis depends on Thr-168, which acts as the Nucleophile. Residues 196 to 199 (RVGD) and 219 to 222 (TGHG) contribute to the substrate site.

This sequence belongs to the Ntn-hydrolase family. Heterodimer of an alpha and beta chain produced by autocleavage. This heterodimer may then dimerize in turn, giving rise to a heterotetramer. Cleaved into an alpha and beta chain by autocatalysis; this activates the enzyme. The N-terminal residue of the beta subunit is responsible for the nucleophile hydrolase activity. In terms of tissue distribution, expressed in brain, kidney, testis and tissues of the gastrointestinal tract. Present in sperm (at protein level). Over-expressed in uterine, mammary, prostatic and ovarian carcinoma.

Its subcellular location is the cytoplasm. The enzyme catalyses L-asparagine + H2O = L-aspartate + NH4(+). It catalyses the reaction Cleavage of a beta-linked Asp residue from the N-terminus of a polypeptide.. Glycine accelerates autocleavage into an alpha and beta chain. In terms of biological role, has both L-asparaginase and beta-aspartyl peptidase activity. May be involved in the production of L-aspartate, which can act as an excitatory neurotransmitter in some brain regions. Is highly active with L-Asp beta-methyl ester. Besides, has catalytic activity toward beta-aspartyl dipeptides and their methyl esters, including beta-L-Asp-L-Phe, beta-L-Asp-L-Phe methyl ester (aspartame), beta-L-Asp-L-Ala, beta-L-Asp-L-Leu and beta-L-Asp-L-Lys. Does not have aspartylglucosaminidase activity and is inactive toward GlcNAc-L-Asn. Likewise, has no activity toward glutamine. The polypeptide is Isoaspartyl peptidase/L-asparaginase (ASRGL1) (Homo sapiens (Human)).